The sequence spans 714 residues: P-loop NTPase domain-containing protein LPA1 (714 aa).

Residues 1–11 (MPMPPQCASSK) show a composition bias toward low complexity. 3 disordered regions span residues 1 to 42 (MPMP…PPPK), 259 to 293 (QKLDIVSHPNTNEGRDDTSDDKAHHGSSELPPRTE), and 595 to 689 (FGSE…GSGN). The span at 271–285 (EGRDDTSDDKAHHGS) shows a compositional bias: basic and acidic residues. The span at 595-617 (FGSEEDADDPPDAGTDEDLTDEE) shows a compositional bias: acidic residues. The span at 618 to 636 (RDMHEIEAGSVDEHSTKSD) shows a compositional bias: basic and acidic residues. Over residues 659 to 670 (AASSTKNSSNQE) the composition is skewed to polar residues.

Expressed in roots, leaf blade shoots, leaf sheath shoots and panicles.

Required for the accumulation of phytic acid in seeds. Phytic acid is the primary storage form of phosphorus in cereal grains and other plant seeds. In Oryza sativa subsp. japonica (Rice), this protein is P-loop NTPase domain-containing protein LPA1.